The sequence spans 94 residues: Large ribosomal subunit protein bL25 (94 aa).

It belongs to the bacterial ribosomal protein bL25 family. Part of the 50S ribosomal subunit; part of the 5S rRNA/L5/L18/L25 subcomplex. Contacts the 5S rRNA. Binds to the 5S rRNA independently of L5 and L18.

Its function is as follows. This is one of the proteins that binds to the 5S RNA in the ribosome where it forms part of the central protuberance. This is Large ribosomal subunit protein bL25 from Erwinia tasmaniensis (strain DSM 17950 / CFBP 7177 / CIP 109463 / NCPPB 4357 / Et1/99).